The following is a 474-amino-acid chain: Transcription factor fscB (474 aa).

Disordered stretches follow at residues 114 to 153 (VDELELSSDTRSSLSPSSHNTTTGHETGLSSVTPPQSYWT) and 207 to 242 (GKEVTKRNKRSRTEAQEASNSPCASSTADSQTNPAP). Residues 120-131 (SSDTRSSLSPSS) show a composition bias toward low complexity. Residues 132–153 (HNTTTGHETGLSSVTPPQSYWT) show a composition bias toward polar residues. Residues 207–221 (GKEVTKRNKRSRTEA) are compositionally biased toward basic and acidic residues. Positions 222 to 240 (QEASNSPCASSTADSQTNP) are enriched in polar residues.

Belongs to the POU transcription factor family. Class-3 subfamily.

Its subcellular location is the nucleus. Functionally, transcription factor; part of the fragmented gene cluster that mediates the biosynthesis of fusarochromene, a tryptophan-derived metabolite closely related to a group of mycotoxins including fusarochromanone. This is Transcription factor fscB from Fusarium equiseti (Fusarium scirpi).